The following is a 330-amino-acid chain: Peroxidase 42 (330 aa).

The signal sequence occupies residues 1–23 (MGGKGVMMVAILCLWALSATSEA). Intrachain disulfides connect Cys40/Cys119, Cys73/Cys78, Cys125/Cys323, and Cys204/Cys231. The active-site Proton acceptor is the His71. Residues Asp72, Val75, Asp79, and Ser81 each contribute to the Ca(2+) site. A substrate-binding site is contributed by Pro167. Asn170 carries an N-linked (GlcNAc...) asparagine glycan. Residue His197 participates in heme b binding. Ser198 contributes to the Ca(2+) binding site. The Ca(2+) site is built by Asp247, Thr250, and Asp255.

This sequence belongs to the peroxidase family. Classical plant (class III) peroxidase subfamily. Requires heme b as cofactor. It depends on Ca(2+) as a cofactor. In terms of tissue distribution, constitutively expressed in the whole plant, with the highest expression in roots.

The protein resides in the secreted. The enzyme catalyses 2 a phenolic donor + H2O2 = 2 a phenolic radical donor + 2 H2O. Its function is as follows. Removal of H(2)O(2), oxidation of toxic reductants, biosynthesis and degradation of lignin, suberization, auxin catabolism, response to environmental stresses such as wounding, pathogen attack and oxidative stress. These functions might be dependent on each isozyme/isoform in each plant tissue. Functionally, might function as heat shock-like defense protein. The polypeptide is Peroxidase 42 (PER42) (Arabidopsis thaliana (Mouse-ear cress)).